We begin with the raw amino-acid sequence, 43 residues long: Alpha-1-antiproteinase 4 (43 aa).

It belongs to the serpin family. Post-translationally, N-glycosylated with carbohydrates having biantennary side chains. Plasma.

The protein resides in the secreted. The sequence is that of Alpha-1-antiproteinase 4 from Equus caballus (Horse).